Consider the following 297-residue polypeptide: XIAP-associated factor 1 (297 aa).

The segment at 22-99 adopts a TRAF-type zinc-finger fold; it reads LHEAHCLMYL…QLAVRLNKVD (78 aa). The segment at 178–255 is disordered; it reads AVTPSPVGKP…NGKLRASSPV (78 aa). Residues 202 to 212 are compositionally biased toward basic and acidic residues; the sequence is QTSKAEKDVRP. Residues 229–245 are compositionally biased toward polar residues; sequence RQAPRGTNKTTNLSLKS.

As to quaternary structure, interacts with BIRC1, BIRC2, BIRC3, BIRC4, BIRC7 and BIRC8. Part of an complex consisting of BIRC4, XAF1 and BIRC5; the complex formation requires IFN-beta stimulation. Interacts with RNF114, the interaction increases XAF1 stability and proapoptotic effects, and may regulate IFN signaling.

It localises to the cytoplasm. Its subcellular location is the nucleus. The protein localises to the mitochondrion. Seems to function as a negative regulator of members of the IAP (inhibitor of apoptosis protein) family. Inhibits anti-caspase activity of BIRC4. Induces cleavage and inactivation of BIRC4 independent of caspase activation. Mediates TNF-alpha-induced apoptosis and is involved in apoptosis in trophoblast cells. May inhibit BIRC4 indirectly by activating the mitochondrial apoptosis pathway. After translocation to mitochondria, promotes translocation of BAX to mitochondria and cytochrome c release from mitochondria. Seems to promote the redistribution of BIRC4 from the cytoplasm to the nucleus, probably independent of BIRC4 inactivation which seems to occur in the cytoplasm. The BIRC4-XAF1 complex mediates down-regulation of BIRC5/survivin; the process requires the E3 ligase activity of BIRC4. Seems to be involved in cellular sensitivity to the proapoptotic actions of TRAIL. May be a tumor suppressor by mediating apoptosis resistance of cancer cells. This chain is XIAP-associated factor 1 (XAF1), found in Bos taurus (Bovine).